The primary structure comprises 252 residues: Flavin-dependent thymidylate synthase (252 aa).

Positions 7-235 (LDVQLVACST…PTVFSDFETS (229 aa)) constitute a ThyX domain. Residues 94–97 (ELVR), 105–109 (QLSQR), and Arg174 each bind dUMP. FAD is bound by residues 97 to 99 (RHR) and Gln105. A ThyX motif motif is present at residues 97 to 107 (RHRHFSFSQLS). Residues 190–192 (NFR) and His196 each bind FAD. Arg201 provides a ligand contact to dUMP. The Involved in ionization of N3 of dUMP, leading to its activation role is filled by Arg201.

It belongs to the thymidylate synthase ThyX family. Homotetramer. It depends on FAD as a cofactor.

It catalyses the reaction dUMP + (6R)-5,10-methylene-5,6,7,8-tetrahydrofolate + NADPH + H(+) = dTMP + (6S)-5,6,7,8-tetrahydrofolate + NADP(+). It participates in pyrimidine metabolism; dTTP biosynthesis. Functionally, catalyzes the reductive methylation of 2'-deoxyuridine-5'-monophosphate (dUMP) to 2'-deoxythymidine-5'-monophosphate (dTMP) while utilizing 5,10-methylenetetrahydrofolate (mTHF) as the methyl donor, and NADPH and FADH(2) as the reductant. This is Flavin-dependent thymidylate synthase from Corynebacterium diphtheriae (strain ATCC 700971 / NCTC 13129 / Biotype gravis).